The sequence spans 432 residues: Short/branched chain specific acyl-CoA dehydrogenase, mitochondrial (432 aa).

The transit peptide at methionine 1 to serine 33 directs the protein to the mitochondrion. An N6-acetyllysine; alternate modification is found at lysine 70. Lysine 70 carries the post-translational modification N6-succinyllysine; alternate. FAD-binding positions include phenylalanine 174–serine 183 and tryptophan 207–serine 209. Position 183 (serine 183) interacts with substrate. Serine 183 is subject to Phosphoserine. Substrate-binding residues include tyrosine 229 and tyrosine 283. An N6-acetyllysine; alternate modification is found at lysine 284. N6-succinyllysine; alternate is present on lysine 284. Asparagine 291–arginine 294 serves as a coordination point for substrate. Residues arginine 319, glutamine 330, and glutamate 387–glycine 391 contribute to the FAD site. The Proton acceptor role is filled by glutamate 414. Alanine 416–asparagine 418 contacts FAD. Lysine 426 is modified (N6-acetyllysine).

This sequence belongs to the acyl-CoA dehydrogenase family. Homotetramer. FAD is required as a cofactor. Ubiquitously expressed.

It localises to the mitochondrion matrix. It catalyses the reaction 2-methylbutanoyl-CoA + oxidized [electron-transfer flavoprotein] + H(+) = (2E)-2-methylbut-2-enoyl-CoA + reduced [electron-transfer flavoprotein]. The catalysed reaction is (2S)-2-methylbutanoyl-CoA + oxidized [electron-transfer flavoprotein] + H(+) = (2E)-2-methylbut-2-enoyl-CoA + reduced [electron-transfer flavoprotein]. It carries out the reaction (2R)-2-methylbutanoyl-CoA + oxidized [electron-transfer flavoprotein] + H(+) = ethylacryloyl-CoA + reduced [electron-transfer flavoprotein]. The enzyme catalyses butanoyl-CoA + oxidized [electron-transfer flavoprotein] + H(+) = (2E)-butenoyl-CoA + reduced [electron-transfer flavoprotein]. It catalyses the reaction 2-methylpropanoyl-CoA + oxidized [electron-transfer flavoprotein] + H(+) = 2-methylpropenoyl-CoA + reduced [electron-transfer flavoprotein]. The catalysed reaction is hexanoyl-CoA + oxidized [electron-transfer flavoprotein] + H(+) = (2E)-hexenoyl-CoA + reduced [electron-transfer flavoprotein]. It carries out the reaction 2-methylhexanoyl-CoA + oxidized [electron-transfer flavoprotein] + H(+) = 2-methylhexenoyl-CoA + reduced [electron-transfer flavoprotein]. The enzyme catalyses valproyl-CoA + oxidized [electron-transfer flavoprotein] + H(+) = (2E)-2-propylpent-2-enoyl-CoA + reduced [electron-transfer flavoprotein]. It functions in the pathway lipid metabolism; mitochondrial fatty acid beta-oxidation. It participates in amino-acid degradation; L-isoleucine degradation. With respect to regulation, competitively inhibited by valproyl-CoA. In terms of biological role, short and branched chain specific acyl-CoA dehydrogenase that catalyzes the removal of one hydrogen from C-2 and C-3 of the fatty acyl-CoA thioester, resulting in the formation of trans-2-enoyl-CoA. Among the different mitochondrial acyl-CoA dehydrogenases, acts specifically on short and branched chain acyl-CoA derivatives such as (S)-2-methylbutyryl-CoA as well as short straight chain acyl-CoAs such as butyryl-CoA. Plays an important role in the metabolism of L-isoleucine by catalyzing the dehydrogenation of 2-methylbutyryl-CoA, one of the steps of the L-isoleucine catabolic pathway. Can also act on valproyl-CoA, a metabolite of valproic acid, an antiepileptic drug. The protein is Short/branched chain specific acyl-CoA dehydrogenase, mitochondrial of Homo sapiens (Human).